The following is a 403-amino-acid chain: Prostaglandin D2 receptor 2 (403 aa).

Residues 1-34 (MANITLKPLCPLLEEMVQLPNHSNSSLRYIDHVS) lie on the Extracellular side of the membrane. N-linked (GlcNAc...) asparagine glycans are attached at residues Asn3, Asn21, and Asn24. A helical membrane pass occupies residues 35 to 55 (VLLHGLASLLGLVENGLILFV). Over 56-71 (VGCRMRQTVVTTWVLH) the chain is Cytoplasmic. A helical transmembrane segment spans residues 72-92 (LALSDLLAAASLPFFTYFLAV). Residues 93–104 (GHSWELGTTFCK) lie on the Extracellular side of the membrane. Cys103 and Cys198 are disulfide-bonded. A helical transmembrane segment spans residues 105 to 125 (LHSSVFFLNMFASGFLLSAIS). The Cytoplasmic segment spans residues 126–147 (LDRCLQVVRPVWAQNHRTVAAA). A helical membrane pass occupies residues 148-168 (HRVCLMLWALAVLNTVPYFVF). Residues 169 to 209 (RDTIPRRDGRIMCYYNMLLLNPGSDRDTTCDYRQKALAVSK) are Extracellular-facing. A helical membrane pass occupies residues 210–230 (FLLAFMVPLAIIASSHVAVSL). The Cytoplasmic portion of the chain corresponds to 231–245 (QLHHRGRQRTGRFVR). The helical transmembrane segment at 246–266 (LVAAIVVAFILCWGPYHIFSL) threads the bilayer. Topologically, residues 267–284 (LEARAHSVTTLRQLASRG) are extracellular. A helical transmembrane segment spans residues 285–305 (LPFVTSLAFFNSVVNPLLYVL). Topologically, residues 306 to 403 (TCPDMLHKLR…KQGSLSCTLD (98 aa)) are cytoplasmic. Positions 329 to 332 (DSDL) match the Involved in the recycling of CRTH2 motif. Ser330 bears the Phosphoserine mark. Disordered stretches follow at residues 332–353 (LSTG…STTT) and 384–403 (PRRV…CTLD). Residues 338 to 348 (KRCRRRHRRRA) show a composition bias toward basic residues. Ser349 bears the Phosphoserine mark. The segment covering 393–403 (EKQGSLSCTLD) has biased composition (polar residues).

The protein belongs to the G-protein coupled receptor 1 family. Post-translationally, phosphorylated.

Its subcellular location is the cell membrane. Its function is as follows. Receptor for prostaglandin D2 (PGD2). Coupled to the G(i)-protein. Receptor activation may result in pertussis toxin-sensitive decreases in cAMP levels and Ca(2+) mobilization. PI3K signaling is also implicated in mediating PTGDR2 effects. PGD2 induced receptor internalization. CRTH2 internalization can be regulated by diverse kinases such as, PKC, PKA, GRK2, GPRK5/GRK5 and GRK6. Receptor activation is responsible, at least in part, in immune regulation and allergic/inflammation responses. This chain is Prostaglandin D2 receptor 2 (Ptgdr2), found in Rattus norvegicus (Rat).